The following is a 338-amino-acid chain: Aspartate carbamoyltransferase catalytic subunit (338 aa).

2 residues coordinate carbamoyl phosphate: Arg59 and Thr60. Lys87 is a binding site for L-aspartate. Carbamoyl phosphate-binding residues include Arg109, His142, and Gln145. Residues Arg182 and Arg253 each coordinate L-aspartate. Gly294 and Pro295 together coordinate carbamoyl phosphate.

The protein belongs to the aspartate/ornithine carbamoyltransferase superfamily. ATCase family. In terms of assembly, heterododecamer (2C3:3R2) of six catalytic PyrB chains organized as two trimers (C3), and six regulatory PyrI chains organized as three dimers (R2).

The enzyme catalyses carbamoyl phosphate + L-aspartate = N-carbamoyl-L-aspartate + phosphate + H(+). The protein operates within pyrimidine metabolism; UMP biosynthesis via de novo pathway; (S)-dihydroorotate from bicarbonate: step 2/3. In terms of biological role, catalyzes the condensation of carbamoyl phosphate and aspartate to form carbamoyl aspartate and inorganic phosphate, the committed step in the de novo pyrimidine nucleotide biosynthesis pathway. This Prochlorococcus marinus (strain MIT 9301) protein is Aspartate carbamoyltransferase catalytic subunit.